The primary structure comprises 310 residues: MKLFAGNSNRVLAESVAQYLNIPLGKASVRRFADQEIFVEIQENVRGEDVFVLQSTSYPANDHLMELLIMIDAFRRSSARRITAVLPYFGYARQDRKPGPRTPISAKLVANLITEAGASRVLTLDLHAGQIQGFFDIPTDNLYAVPVIARDVKANYATGNCMVVSPDVGGVVRARSLAKRIDAQLAIVDKRRERPGESEVMNVIGDVSGKDCLLFDDIVDSGGTLCNAAEALLNKGANSVTAYITHGVLSGGAVARIASSKLKELVITDSIQPTTAINDAPNIRVLSISDLIGEAIARTAAEESVSSLFD.

ATP-binding positions include 34–36 and 93–94; these read DQE and RQ. Residues histidine 127 and aspartate 167 each contribute to the Mg(2+) site. The active site involves lysine 190. Residues arginine 192, aspartate 216, and 220–224 contribute to the D-ribose 5-phosphate site; that span reads DSGGT.

This sequence belongs to the ribose-phosphate pyrophosphokinase family. Class I subfamily. Homohexamer. Mg(2+) serves as cofactor.

It localises to the cytoplasm. It carries out the reaction D-ribose 5-phosphate + ATP = 5-phospho-alpha-D-ribose 1-diphosphate + AMP + H(+). The protein operates within metabolic intermediate biosynthesis; 5-phospho-alpha-D-ribose 1-diphosphate biosynthesis; 5-phospho-alpha-D-ribose 1-diphosphate from D-ribose 5-phosphate (route I): step 1/1. Functionally, involved in the biosynthesis of the central metabolite phospho-alpha-D-ribosyl-1-pyrophosphate (PRPP) via the transfer of pyrophosphoryl group from ATP to 1-hydroxyl of ribose-5-phosphate (Rib-5-P). This Brucella melitensis biotype 1 (strain ATCC 23456 / CCUG 17765 / NCTC 10094 / 16M) protein is Ribose-phosphate pyrophosphokinase.